A 274-amino-acid chain; its full sequence is 4-diphosphocytidyl-2-C-methyl-D-erythritol kinase (274 aa).

Lys-14 is an active-site residue. 94–104 (PMQAGLGGGSS) is an ATP binding site. Residue Asp-134 is part of the active site.

It belongs to the GHMP kinase family. IspE subfamily.

It catalyses the reaction 4-CDP-2-C-methyl-D-erythritol + ATP = 4-CDP-2-C-methyl-D-erythritol 2-phosphate + ADP + H(+). Its pathway is isoprenoid biosynthesis; isopentenyl diphosphate biosynthesis via DXP pathway; isopentenyl diphosphate from 1-deoxy-D-xylulose 5-phosphate: step 3/6. Its function is as follows. Catalyzes the phosphorylation of the position 2 hydroxy group of 4-diphosphocytidyl-2C-methyl-D-erythritol. In Thermosipho melanesiensis (strain DSM 12029 / CIP 104789 / BI429), this protein is 4-diphosphocytidyl-2-C-methyl-D-erythritol kinase.